Here is a 185-residue protein sequence, read N- to C-terminus: MNSDLTSFDKIEQKIGGSRKISNYIIGGMLTIGGIGFLLASISSYTGRDLLPLGNPSTLLFIPQGIIMGAYGVIANLLNFYLWYLVYINFGSGSNYFDKSSKSVEIKRKGLFKDVEVKLNFDEIKSVKLDISEGFNPRRRIALVLKGRKKPLPLSGAGELKPLLQVEEEGARLAKFLDVNLEGLK.

Helical transmembrane passes span 24–44 (YIIGGMLTIGGIGFLLASISS) and 66–86 (IIMGAYGVIANLLNFYLWYLV).

It belongs to the Ycf4 family.

The protein resides in the cellular thylakoid membrane. Its function is as follows. Seems to be required for the assembly of the photosystem I complex. The polypeptide is Photosystem I assembly protein Ycf4 (Prochlorococcus marinus (strain AS9601)).